The chain runs to 121 residues: Large ribosomal subunit protein bL17 (121 aa).

The protein belongs to the bacterial ribosomal protein bL17 family. As to quaternary structure, part of the 50S ribosomal subunit. Contacts protein L32.

This chain is Large ribosomal subunit protein bL17, found in Mycoplasmopsis agalactiae (strain NCTC 10123 / CIP 59.7 / PG2) (Mycoplasma agalactiae).